A 492-amino-acid polypeptide reads, in one-letter code: Protein nucleotidyltransferase YdiU (492 aa).

The ATP site is built by Gly-91, Gly-93, Arg-94, Lys-114, Asp-126, Gly-127, Arg-177, and Arg-184. Asp-253 serves as the catalytic Proton acceptor. 2 residues coordinate Mg(2+): Asn-254 and Asp-263. ATP is bound at residue Asp-263.

It belongs to the SELO family. The cofactor is Mg(2+). Mn(2+) serves as cofactor.

The enzyme catalyses L-seryl-[protein] + ATP = 3-O-(5'-adenylyl)-L-seryl-[protein] + diphosphate. It catalyses the reaction L-threonyl-[protein] + ATP = 3-O-(5'-adenylyl)-L-threonyl-[protein] + diphosphate. The catalysed reaction is L-tyrosyl-[protein] + ATP = O-(5'-adenylyl)-L-tyrosyl-[protein] + diphosphate. It carries out the reaction L-histidyl-[protein] + UTP = N(tele)-(5'-uridylyl)-L-histidyl-[protein] + diphosphate. The enzyme catalyses L-seryl-[protein] + UTP = O-(5'-uridylyl)-L-seryl-[protein] + diphosphate. It catalyses the reaction L-tyrosyl-[protein] + UTP = O-(5'-uridylyl)-L-tyrosyl-[protein] + diphosphate. Nucleotidyltransferase involved in the post-translational modification of proteins. It can catalyze the addition of adenosine monophosphate (AMP) or uridine monophosphate (UMP) to a protein, resulting in modifications known as AMPylation and UMPylation. The polypeptide is Protein nucleotidyltransferase YdiU (Maridesulfovibrio salexigens (strain ATCC 14822 / DSM 2638 / NCIMB 8403 / VKM B-1763) (Desulfovibrio salexigens)).